Here is a 513-residue protein sequence, read N- to C-terminus: Ribonuclease Y (513 aa).

A helical membrane pass occupies residues 6 to 26 (YIIIAVVIIIICVILGLYVVD). Positions 35 to 59 (EASKEARRLKEEAERDAEAKKKEAI) are disordered. The region spanning 203-288 (TVHVVNLPND…EMVEKAKKEV (86 aa)) is the KH domain. Residues 329–422 (VLKHSIEVSH…VQAADAISAA (94 aa)) form the HD domain.

Belongs to the RNase Y family.

The protein resides in the cell membrane. Endoribonuclease that initiates mRNA decay. The chain is Ribonuclease Y from Clostridium botulinum (strain Okra / Type B1).